The chain runs to 332 residues: D-galactose/methyl-galactoside binding periplasmic protein MglB (332 aa).

The first 23 residues, 1-23 (MNKKVLTLSAVMASLLFGAHAHA), serve as a signal peptide directing secretion. Residues D37 and N114 each contribute to the beta-D-galactose site. Beta-D-glucose contacts are provided by D37 and N114. D157, N159, D161, K163, and Q165 together coordinate Ca(2+). Beta-D-galactose contacts are provided by H175, D177, and R181. Residues H175, D177, and R181 each coordinate beta-D-glucose. E228 serves as a coordination point for Ca(2+). Residues N234, D259, and N279 each coordinate beta-D-galactose. Positions 234, 259, and 279 each coordinate beta-D-glucose.

It belongs to the bacterial solute-binding protein 2 family. In terms of assembly, the ABC transporter complex is composed of one ATP-binding protein (MglA), two transmembrane proteins (MglC) and a solute-binding protein (MglB).

It localises to the periplasm. Functionally, part of the ABC transporter complex MglABC involved in galactose/methyl galactoside import. In addition, binds D-galactose and D-glucose and plays a role in the chemotaxis towards these two sugars by interacting with the Trg chemoreceptor. The chain is D-galactose/methyl-galactoside binding periplasmic protein MglB (mglB) from Salmonella typhimurium (strain LT2 / SGSC1412 / ATCC 700720).